The primary structure comprises 338 residues: Ketol-acid reductoisomerase (NADP(+)) (338 aa).

The 181-residue stretch at 1-181 (MKVSYDKDCD…GGGRTGIIET (181 aa)) folds into the KARI N-terminal Rossmann domain. NADP(+)-binding positions include 24 to 27 (YGSQ), arginine 47, serine 50, serine 52, and 82 to 85 (DEFQ). Residue histidine 107 is part of the active site. An NADP(+)-binding site is contributed by glycine 133. Residues 182–327 (TFKDETETDL…EKLRAMMPWI (146 aa)) form the KARI C-terminal knotted domain. Residues aspartate 190, glutamate 194, glutamate 226, and glutamate 230 each contribute to the Mg(2+) site. Serine 251 is a binding site for substrate.

This sequence belongs to the ketol-acid reductoisomerase family. The cofactor is Mg(2+).

The enzyme catalyses (2R)-2,3-dihydroxy-3-methylbutanoate + NADP(+) = (2S)-2-acetolactate + NADPH + H(+). It carries out the reaction (2R,3R)-2,3-dihydroxy-3-methylpentanoate + NADP(+) = (S)-2-ethyl-2-hydroxy-3-oxobutanoate + NADPH + H(+). It participates in amino-acid biosynthesis; L-isoleucine biosynthesis; L-isoleucine from 2-oxobutanoate: step 2/4. Its pathway is amino-acid biosynthesis; L-valine biosynthesis; L-valine from pyruvate: step 2/4. In terms of biological role, involved in the biosynthesis of branched-chain amino acids (BCAA). Catalyzes an alkyl-migration followed by a ketol-acid reduction of (S)-2-acetolactate (S2AL) to yield (R)-2,3-dihydroxy-isovalerate. In the isomerase reaction, S2AL is rearranged via a Mg-dependent methyl migration to produce 3-hydroxy-3-methyl-2-ketobutyrate (HMKB). In the reductase reaction, this 2-ketoacid undergoes a metal-dependent reduction by NADPH to yield (R)-2,3-dihydroxy-isovalerate. This is Ketol-acid reductoisomerase (NADP(+)) from Stutzerimonas stutzeri (strain A1501) (Pseudomonas stutzeri).